The sequence spans 1043 residues: Sarcoplasmic/endoplasmic reticulum calcium ATPase 2 (1043 aa).

Over 1 to 48 (MENAHTKTVEEVLGHFGVNESTGLSLEQVKKLKERWGSNELPAEEGKT) the chain is Cytoplasmic. Residue serine 38 is modified to Phosphoserine. Residues 49–69 (LLELVIEQFEDLLVRILLLAA) traverse the membrane as a helical segment. At 70-89 (CISFVLAWFEEGEETITAFV) the chain is on the lumenal side. The chain crosses the membrane as a helical span at residues 90 to 110 (EPFVILLILVANAIVGVWQER). Residues 111–253 (NAENAIEALK…QERTPLQQKL (143 aa)) are Cytoplasmic-facing. A helical transmembrane segment spans residues 254-273 (DEFGEQLSKVISLICIAVWI). The Lumenal portion of the chain corresponds to 274 to 295 (INIGHFNDPVHGGSWIRGAIYY). A 3'-nitrotyrosine mark is found at tyrosine 294 and tyrosine 295. The helical transmembrane segment at 296–313 (FKIAVALAVAAIPEGLPA) threads the bilayer. Residues valine 304, alanine 305, isoleucine 307, and glutamate 309 each coordinate Ca(2+). The Cytoplasmic segment spans residues 314–756 (VITTCLALGT…EEGRAIYNNM (443 aa)). Aspartate 351 acts as the 4-aspartylphosphate intermediate in catalysis. Residues aspartate 351 and threonine 353 each contribute to the Mg(2+) site. Position 353 (threonine 353) interacts with ATP. A Phosphothreonine modification is found at threonine 441. Residues glutamate 442, arginine 489, and lysine 514 each coordinate ATP. Phosphoserine is present on serine 531. An ATP-binding site is contributed by arginine 559. Residues 575-594 (MHLEDSANFIKYETNLTFVG) form an interaction with HAX1 region. Serine 580 bears the Phosphoserine mark. ATP is bound by residues threonine 624, glycine 625, and aspartate 626. Serine 661 and serine 663 each carry phosphoserine. ATP-binding residues include arginine 677 and lysine 683. Aspartate 702 provides a ligand contact to Mg(2+). Asparagine 705 lines the ATP pocket. A helical membrane pass occupies residues 757 to 776 (KQFIRYLISSNVGEVVCIFL). 2 residues coordinate Ca(2+): asparagine 767 and glutamate 770. The Lumenal segment spans residues 777 to 786 (TAALGFPEAL). The chain crosses the membrane as a helical span at residues 787–807 (IPVQLLWVNLVTDGLPATALG). The tract at residues 787 to 807 (IPVQLLWVNLVTDGLPATALG) is interaction with PLN. The segment at 788-1043 (PVQLLWVNLV…DTNFSDMFWS (256 aa)) is interaction with TMEM64 and PDIA3. 3 residues coordinate Ca(2+): asparagine 795, threonine 798, and aspartate 799. The Cytoplasmic segment spans residues 808 to 827 (FNPPDLDIMNKPPRNPKEPL). The helical transmembrane segment at 828 to 850 (ISGWLFFRYLAIGCYVGAATVGA) threads the bilayer. Residues 851–896 (AAWWFIAADGGPRVSFYQLSHFLQCKEDNPDFEGVDCAIFESPYPM) lie on the Lumenal side of the membrane. The cysteines at positions 875 and 887 are disulfide-linked. The helical transmembrane segment at 897–916 (TMALSVLVTIEMCNALNSLS) threads the bilayer. Glutamate 907 serves as a coordination point for Ca(2+). The Cytoplasmic portion of the chain corresponds to 917-929 (ENQSLLRMPPWEN). The chain crosses the membrane as a helical span at residues 930 to 948 (IWLVGSICLSMSLHFLILY). The tract at residues 931 to 942 (WLVGSICLSMSL) is interaction with PLN. At 949-963 (VEPLPLIFQITPLNL) the chain is on the lumenal side. A helical transmembrane segment spans residues 964–984 (TQWLMVLKISLPVILMDETLK). Topologically, residues 985-1043 (FVARNYLEPGKECAQPATKPSCSLSACTDGISWPFVLLIMPLVVWVYSTDTNFSDMFWS) are cytoplasmic.

The protein belongs to the cation transport ATPase (P-type) (TC 3.A.3) family. Type IIA subfamily. In terms of assembly, interacts with sarcolipin (SLN); the interaction inhibits ATP2A2 Ca(2+) affinity. Interacts with phospholamban (PLN); the interaction inhibits ATP2A2 Ca(2+) affinity. Interacts with myoregulin (MRLN). Interacts with ARLN and ERLN; the interactions inhibit ATP2A2 Ca(2+) affinity. Interacts with STRIT1/DWORF; the interaction results in activation of ATP2A2. Interacts with the monomeric forms of SLN, PLN, ARLN, ERLN and STRI1/DWORF. Interacts with HAX1. Interacts with S100A8 and S100A9. Interacts with SLC35G1 and STIM1. Interacts with TMEM203. Interacts with TMEM64 and PDIA3. Interacts with TMX1. Interacts with TMX2. Interacts with VMP1; VMP1 competes with PLN and SLN to prevent them from forming an inhibitory complex with ATP2A2. Interacts with ULK1. Interacts with S100A1 in a Ca(2+)-dependent manner. Interacts with TUNAR. Interacts with FLVCR2; this interaction occurs in the absence of heme and promotes ATP2A2 proteasomal degradation; this complex is dissociated upon heme binding. Interacts with FNIP1. Interacts with TRAM2 (via C-terminus). Requires Mg(2+) as cofactor. In terms of processing, nitrated under oxidative stress. Nitration on the two tyrosine residues inhibits catalytic activity. Post-translationally, serotonylated on Gln residues by TGM2 in response to hypoxia, leading to its inactivation. In terms of tissue distribution, isoform 2 is highly expressed in heart and slow twitch skeletal muscle. Isoform 1 is widely expressed.

It localises to the endoplasmic reticulum membrane. The protein localises to the sarcoplasmic reticulum membrane. The enzyme catalyses Ca(2+)(in) + ATP + H2O = Ca(2+)(out) + ADP + phosphate + H(+). Has different conformational states with differential Ca2+ affinity. The E1 conformational state (active form) shows high Ca(2+) affinity, while the E2 state exhibits low Ca(2+) affinity. Binding of ATP allosterically increases its affinity for subsequent binding of Ca2+. Reversibly inhibited by phospholamban (PLN) at low calcium concentrations. PLN inhibits ATP2A2 Ca(2+) affinity by disrupting its allosteric activation by ATP. Inhibited by sarcolipin (SLN) and myoregulin (MRLN). The inhibition is blocked by VMP1. Enhanced by STRIT1/DWORF; STRIT1 increases activity by displacing sarcolipin (SLN), phospholamban (PLN) and myoregulin (MRLN). Stabilizes SERCA2 in its E2 state. In terms of biological role, this magnesium-dependent enzyme catalyzes the hydrolysis of ATP coupled with the translocation of calcium from the cytosol to the sarcoplasmic reticulum lumen. Involved in autophagy in response to starvation. Upon interaction with VMP1 and activation, controls ER-isolation membrane contacts for autophagosome formation. Also modulates ER contacts with lipid droplets, mitochondria and endosomes. In coordination with FLVCR2 mediates heme-stimulated switching from mitochondrial ATP synthesis to thermogenesis. Its function is as follows. Involved in the regulation of the contraction/relaxation cycle. Acts as a regulator of TNFSF11-mediated Ca(2+) signaling pathways via its interaction with TMEM64 which is critical for the TNFSF11-induced CREB1 activation and mitochondrial ROS generation necessary for proper osteoclast generation. Association between TMEM64 and SERCA2 in the ER leads to cytosolic Ca(2+) spiking for activation of NFATC1 and production of mitochondrial ROS, thereby triggering Ca(2+) signaling cascades that promote osteoclast differentiation and activation. In Rattus norvegicus (Rat), this protein is Sarcoplasmic/endoplasmic reticulum calcium ATPase 2 (Atp2a2).